Reading from the N-terminus, the 421-residue chain is Testin (421 aa).

The PET domain occupies 92–199; the sequence is MILTNPVAAK…GDVKLPYEMG (108 aa). The segment at 133 to 164 is disordered; it reads EKQPVAGSEGAQYRKKQLAKQLPAHDQDPSKC. Residues 155–164 are compositionally biased toward basic and acidic residues; the sequence is PAHDQDPSKC. LIM zinc-binding domains follow at residues 234–297, 299–359, and 362–421; these read YFCY…CDSE, PRCA…NHAV, and QGCH…KMMS.

It belongs to the prickle / espinas / testin family. Interacts via LIM domain 1 with ZYX. Interacts (via LIM domain 3) with ENAH and VASP. Interacts with ALKBH4, talin, actin, alpha-actinin, GRIP1 and PXN. Interacts (via LIM domain 2) with ACTL7A (via N-terminus). Heterodimer with ACTL7A; the heterodimer interacts with ENAH to form a heterotrimer.

The protein resides in the cytoplasm. It localises to the cell junction. Its subcellular location is the focal adhesion. In terms of biological role, scaffold protein that may play a role in cell adhesion, cell spreading and in the reorganization of the actin cytoskeleton. Plays a role in the regulation of cell proliferation. May act as a tumor suppressor. In Oryctolagus cuniculus (Rabbit), this protein is Testin (TES).